The sequence spans 564 residues: Cytochrome c oxidase subunit 1 (564 aa).

The interval 1 to 23 (MTAVAPRLENYAEPTRPAPTGGA) is disordered. A run of 7 helical transmembrane segments spans residues 43–63 (MMYIVMSFVWFFVGGLMALLI), 83–103 (LFTLHGTIMLLAFGTPVVWGF), 122–142 (LNAFGFWITQIGVVAMLAGFL), 171–191 (FWIIGVGATGVGTIASAVNMI), 214–234 (IFVASVIVLLIFPLLTAAALG), 259–279 (LFWFFGHPEVYVLALPFFGIV), and 292–312 (FGYIGLVFATLSIGMLSMAVW). His87 is a binding site for Fe(II)-heme a. Residues His265 and Tyr269 each coordinate Cu cation. The 1'-histidyl-3'-tyrosine (His-Tyr) cross-link spans 265-269 (HPEVY). Cu cation contacts are provided by His314 and His315. Helical transmembrane passes span 316-336 (MFVTGAILLPFFSFMTFLISV) and 360-380 (MTWTMGFLVTFLFGGLTGIML). His398 lines the heme a3 pocket. Transmembrane regions (helical) follow at residues 399–419 (FHYTLFGTVVFASYAGVYFWF), 434–454 (IHFWITFVGFHGTFLVQHWVG), and 477–497 (ISTVFSFLLGVSVIPFIWNVF). Position 400 (His400) interacts with Fe(II)-heme a.

Belongs to the heme-copper respiratory oxidase family. Associates with subunits II, III and IV to form cytochrome c oxidase. Cu(2+) is required as a cofactor. Requires heme as cofactor.

Its subcellular location is the cell membrane. The catalysed reaction is 4 Fe(II)-[cytochrome c] + O2 + 8 H(+)(in) = 4 Fe(III)-[cytochrome c] + 2 H2O + 4 H(+)(out). The protein operates within energy metabolism; oxidative phosphorylation. Its function is as follows. Cytochrome c oxidase is the component of the respiratory chain that catalyzes the reduction of oxygen to water. Subunits 1-3 form the functional core of the enzyme complex. CO I is the catalytic subunit of the enzyme. Electrons originating in cytochrome c are transferred via the copper A center of subunit 2 and heme A of subunit 1 to the bimetallic center formed by heme A3 and copper B. The sequence is that of Cytochrome c oxidase subunit 1 (ctaD) from Corynebacterium diphtheriae (strain ATCC 700971 / NCTC 13129 / Biotype gravis).